The chain runs to 536 residues: Pre-mRNA-splicing factor SLU7 (536 aa).

The interval 22-42 is disordered; the sequence is EARKAGLAPAEVDEDGKEINP. The segment at 94–111 adopts a CCHC-type zinc-finger fold; that stretch reads GACENCGAMTHDKKSCME. The segment at 178–201 is disordered; sequence KLEEKDGEEGDENVASEEEDEEDG. A compositionally biased stretch (acidic residues) spans 182–200; the sequence is KDGEEGDENVASEEEDEED.

It belongs to the SLU7 family.

Its subcellular location is the nucleus. In terms of biological role, participates in the second catalytic step of pre-mRNA splicing, when the free hydroxyl group of exon I attacks the 3'-splice site to generate spliced mRNA and the excised lariat intron. The polypeptide is Pre-mRNA-splicing factor SLU7 (Oryza sativa subsp. indica (Rice)).